Here is a 94-residue protein sequence, read N- to C-terminus: Co-chaperonin GroES (94 aa).

It belongs to the GroES chaperonin family. Heptamer of 7 subunits arranged in a ring. Interacts with the chaperonin GroEL.

The protein resides in the cytoplasm. Its function is as follows. Together with the chaperonin GroEL, plays an essential role in assisting protein folding. The GroEL-GroES system forms a nano-cage that allows encapsulation of the non-native substrate proteins and provides a physical environment optimized to promote and accelerate protein folding. GroES binds to the apical surface of the GroEL ring, thereby capping the opening of the GroEL channel. This is Co-chaperonin GroES from Anoxybacillus flavithermus (strain DSM 21510 / WK1).